The primary structure comprises 186 residues: Threonylcarbamoyl-AMP synthase (186 aa).

The YrdC-like domain maps to 5-186 (TQSINDAVKC…DAITGEILRL (182 aa)).

This sequence belongs to the SUA5 family. TsaC subfamily.

It localises to the cytoplasm. It carries out the reaction L-threonine + hydrogencarbonate + ATP = L-threonylcarbamoyladenylate + diphosphate + H2O. Functionally, required for the formation of a threonylcarbamoyl group on adenosine at position 37 (t(6)A37) in tRNAs that read codons beginning with adenine. Catalyzes the conversion of L-threonine, HCO(3)(-)/CO(2) and ATP to give threonylcarbamoyl-AMP (TC-AMP) as the acyladenylate intermediate, with the release of diphosphate. The protein is Threonylcarbamoyl-AMP synthase of Coxiella burnetii (strain RSA 493 / Nine Mile phase I).